We begin with the raw amino-acid sequence, 446 residues long: B3 domain-containing protein REM12 (446 aa).

The interval 1–46 (MVLNSSDLGPSRCDIRDLPAPSSTNDQGKTELARKKKVKRSNTEIE) is disordered. DNA-binding regions (TF-B3) lie at residues 56-153 (CFVA…FCST) and 193-289 (FMTL…VNTQ). The interval 295-334 (SQQGECSRDSEKESSICAEPSRGNKKWKATNNRKERRDSS) is disordered. The TF-B3 3 DNA-binding region spans 341 to 435 (YVTLTLTPED…TTPVFKFCSN (95 aa)).

The protein localises to the nucleus. The chain is B3 domain-containing protein REM12 (REM12) from Arabidopsis thaliana (Mouse-ear cress).